We begin with the raw amino-acid sequence, 215 residues long: Probable maleylacetoacetate isomerase (215 aa).

Positions 2–85 constitute a GST N-terminal domain; sequence MSLILYGYWR…YLDETYPAPR (84 aa). A GST C-terminal domain is found at 90–215; it reads RGAERYQVKA…AAPENQPDAC (126 aa).

It belongs to the GST superfamily. Zeta family.

The catalysed reaction is 4-maleylacetoacetate = 4-fumarylacetoacetate. The protein operates within amino-acid degradation; L-phenylalanine degradation; acetoacetate and fumarate from L-phenylalanine: step 5/6. In Vibrio cholerae serotype O1 (strain ATCC 39315 / El Tor Inaba N16961), this protein is Probable maleylacetoacetate isomerase (maiA).